Consider the following 197-residue polypeptide: NADH-quinone oxidoreductase subunit C (197 aa).

It belongs to the complex I 30 kDa subunit family. As to quaternary structure, NDH-1 is composed of 14 different subunits. Subunits NuoB, C, D, E, F, and G constitute the peripheral sector of the complex.

The protein resides in the cell inner membrane. It carries out the reaction a quinone + NADH + 5 H(+)(in) = a quinol + NAD(+) + 4 H(+)(out). NDH-1 shuttles electrons from NADH, via FMN and iron-sulfur (Fe-S) centers, to quinones in the respiratory chain. The immediate electron acceptor for the enzyme in this species is believed to be ubiquinone. Couples the redox reaction to proton translocation (for every two electrons transferred, four hydrogen ions are translocated across the cytoplasmic membrane), and thus conserves the redox energy in a proton gradient. This chain is NADH-quinone oxidoreductase subunit C, found in Neisseria meningitidis serogroup A / serotype 4A (strain DSM 15465 / Z2491).